Consider the following 111-residue polypeptide: DNA-binding protein MTH_1615 (111 aa).

It belongs to the PDCD5 family.

In terms of biological role, DNA-binding protein which can interact with a randomly chosen 20-mer of double-stranded DNA. This is DNA-binding protein MTH_1615 from Methanothermobacter thermautotrophicus (strain ATCC 29096 / DSM 1053 / JCM 10044 / NBRC 100330 / Delta H) (Methanobacterium thermoautotrophicum).